A 210-amino-acid chain; its full sequence is Protein-methionine-sulfoxide reductase heme-binding subunit MsrQ (210 aa).

6 consecutive transmembrane segments (helical) span residues 8-28, 37-57, 75-95, 110-130, 147-167, and 169-189; these read LAVF…AWIF, VLVE…MSMT, LGLW…LFIL, PYII…VTSN, LIYV…RADL, and EWAL…PMIT.

The protein belongs to the MsrQ family. Heterodimer of a catalytic subunit (MsrP) and a heme-binding subunit (MsrQ). FMN is required as a cofactor. The cofactor is heme b.

The protein localises to the cell inner membrane. Its function is as follows. Part of the MsrPQ system that repairs oxidized periplasmic proteins containing methionine sulfoxide residues (Met-O), using respiratory chain electrons. Thus protects these proteins from oxidative-stress damage caused by reactive species of oxygen and chlorine generated by the host defense mechanisms. MsrPQ is essential for the maintenance of envelope integrity under bleach stress, rescuing a wide series of structurally unrelated periplasmic proteins from methionine oxidation. MsrQ provides electrons for reduction to the reductase catalytic subunit MsrP, using the quinone pool of the respiratory chain. The polypeptide is Protein-methionine-sulfoxide reductase heme-binding subunit MsrQ (Pseudomonas savastanoi pv. phaseolicola (strain 1448A / Race 6) (Pseudomonas syringae pv. phaseolicola (strain 1448A / Race 6))).